The primary structure comprises 264 residues: Putative hydro-lyase Psyr_0498 (264 aa).

The protein belongs to the D-glutamate cyclase family.

In Pseudomonas syringae pv. syringae (strain B728a), this protein is Putative hydro-lyase Psyr_0498.